Here is a 198-residue protein sequence, read N- to C-terminus: Recombination protein RecR (198 aa).

Residues 57 to 72 form a C4-type zinc finger; that stretch reads CSICGNLTDDDPCHIC. The Toprim domain maps to 80 to 175; it reads TTILVVEDAK…KVTRLARGLA (96 aa).

The protein belongs to the RecR family.

May play a role in DNA repair. It seems to be involved in an RecBC-independent recombinational process of DNA repair. It may act with RecF and RecO. In Streptococcus pyogenes serotype M1, this protein is Recombination protein RecR.